Here is a 238-residue protein sequence, read N- to C-terminus: Purine nucleoside phosphorylase DeoD-type (238 aa).

His4 serves as a coordination point for a purine D-ribonucleoside. Phosphate is bound by residues Gly20, Arg24, Arg43, and 87-90 (RVGS). A purine D-ribonucleoside contacts are provided by residues 179 to 181 (EME) and 203 to 204 (SD). Residue Asp204 is the Proton donor of the active site.

The protein belongs to the PNP/UDP phosphorylase family. In terms of assembly, homohexamer; trimer of homodimers.

The catalysed reaction is a purine D-ribonucleoside + phosphate = a purine nucleobase + alpha-D-ribose 1-phosphate. It catalyses the reaction a purine 2'-deoxy-D-ribonucleoside + phosphate = a purine nucleobase + 2-deoxy-alpha-D-ribose 1-phosphate. Catalyzes the reversible phosphorolytic breakdown of the N-glycosidic bond in the beta-(deoxy)ribonucleoside molecules, with the formation of the corresponding free purine bases and pentose-1-phosphate. The sequence is that of Purine nucleoside phosphorylase DeoD-type from Haemophilus ducreyi (strain 35000HP / ATCC 700724).